We begin with the raw amino-acid sequence, 336 residues long: tRNA N6-adenosine threonylcarbamoyltransferase (336 aa).

Residues His115, His119, and Tyr136 each contribute to the Fe cation site. Substrate contacts are provided by residues 136 to 140 (YVAGG), Asp168, Glu185, and Ser266. Asp294 contributes to the Fe cation binding site.

The protein belongs to the KAE1 / TsaD family. The cofactor is Fe(2+).

Its subcellular location is the cytoplasm. It catalyses the reaction L-threonylcarbamoyladenylate + adenosine(37) in tRNA = N(6)-L-threonylcarbamoyladenosine(37) in tRNA + AMP + H(+). In terms of biological role, required for the formation of a threonylcarbamoyl group on adenosine at position 37 (t(6)A37) in tRNAs that read codons beginning with adenine. Is probably involved in the transfer of the threonylcarbamoyl moiety of threonylcarbamoyl-AMP (TC-AMP) to the N6 group of A37. The polypeptide is tRNA N6-adenosine threonylcarbamoyltransferase (Thermofilum pendens (strain DSM 2475 / Hrk 5)).